The primary structure comprises 90 residues: Small ribosomal subunit protein uS15 (90 aa).

Belongs to the universal ribosomal protein uS15 family. As to quaternary structure, part of the 30S ribosomal subunit. Forms a bridge to the 50S subunit in the 70S ribosome, contacting the 23S rRNA.

Its function is as follows. One of the primary rRNA binding proteins, it binds directly to 16S rRNA where it helps nucleate assembly of the platform of the 30S subunit by binding and bridging several RNA helices of the 16S rRNA. In terms of biological role, forms an intersubunit bridge (bridge B4) with the 23S rRNA of the 50S subunit in the ribosome. This chain is Small ribosomal subunit protein uS15, found in Campylobacter hominis (strain ATCC BAA-381 / DSM 21671 / CCUG 45161 / LMG 19568 / NCTC 13146 / CH001A).